Reading from the N-terminus, the 268-residue chain is DNA repair protein RecO (268 aa).

Belongs to the RecO family.

In terms of biological role, involved in DNA repair and RecF pathway recombination. The protein is DNA repair protein RecO of Mycobacterium leprae (strain Br4923).